The primary structure comprises 364 residues: Mannonate dehydratase (364 aa).

This sequence belongs to the mannonate dehydratase family. The cofactor is Fe(2+). It depends on Mn(2+) as a cofactor.

The enzyme catalyses D-mannonate = 2-dehydro-3-deoxy-D-gluconate + H2O. Its pathway is carbohydrate metabolism; pentose and glucuronate interconversion. Catalyzes the dehydration of D-mannonate. The chain is Mannonate dehydratase from Streptococcus equi subsp. zooepidemicus (strain MGCS10565).